Reading from the N-terminus, the 2314-residue chain is A-kinase anchor protein 6 (2314 aa).

The segment covering 1-12 has biased composition (polar residues); sequence MLTMSVTLSPLR. Disordered stretches follow at residues 1–25, 285–432, 505–613, and 736–755; these read MLTM…DASP, PSSC…DPPD, SLCR…PCHA, and TDEK…HSAT. Residues 301 to 311 show a composition bias toward basic and acidic residues; sequence SDDHKGEHGED. Residues 319–330 are compositionally biased toward polar residues; it reads QLDSTVGMSSLD. The span at 398–420 shows a compositional bias: basic and acidic residues; the sequence is ETQKNERKGSDRKGQVVDLKPEL. The span at 569–592 shows a compositional bias: low complexity; it reads SKASSSPPCSHSSESSLGSDSIKS. Residues 736-753 show a composition bias toward basic and acidic residues; it reads TDEKSERPSSSEKNESHS. 2 Spectrin repeats span residues 768–847 and 1033–1148; these read QHQE…QLLE and ILEK…LLDD. Ser1072 bears the Phosphoserine mark. The interval 1349-1401 is disordered; that stretch reads CHSGDLSQNSGSESGIVSEGDNEMPTNSDMSLFSMVDGSPSNPETEHPDPQMG. Positions 1353–1363 are enriched in polar residues; that stretch reads DLSQNSGSESG. A phosphoserine mark is found at Ser1568 and Ser1593. Composition is skewed to basic and acidic residues over residues 1816–1831 and 1874–1891; these read RSGV…DGGG and GENK…HVAD. 3 disordered regions span residues 1816–1838, 1854–1926, and 1940–2012; these read RSGV…ANPS, LSEN…KTIS, and SEDS…SGAR. Residues 1917–1926 are compositionally biased toward polar residues; sequence NLASNVKTIS. The span at 1944 to 1958 shows a compositional bias: basic and acidic residues; that stretch reads SVARKEFCPPNDRHP. A PKA-RII subunit binding domain region spans residues 2062 to 2075; it reads IIDMASTALKSKSQ. The interval 2166–2286 is disordered; that stretch reads EEAGLPGALP…NAKQPKGKVA (121 aa). The span at 2215 to 2226 shows a compositional bias: basic and acidic residues; that stretch reads GADDAKEGDDVS. A compositionally biased stretch (polar residues) spans 2227-2243; it reads HTSQGCAESTEPTTPSG.

As to quaternary structure, interacts with RII subunit of PKA, phosphatase 2B (calcineurin) and AKAP79. Interacts with SYNPO2.

The protein localises to the sarcoplasmic reticulum. It localises to the nucleus membrane. Binds to type II regulatory subunits of protein kinase A and anchors/targets them to the nuclear membrane or sarcoplasmic reticulum. May act as an adapter for assembling multiprotein complexes. The sequence is that of A-kinase anchor protein 6 (Akap6) from Rattus norvegicus (Rat).